Reading from the N-terminus, the 579-residue chain is Glypican-2 (579 aa).

Residues 1-21 (MSALRPLLLLLLHLCPGLGPG) form the signal peptide. Serine 55, serine 92, and serine 155 each carry an O-linked (Xyl...) (heparan sulfate) serine glycan. Disordered regions lie at residues 347–382 (GTPHPVQSRSRRAPAPREEASRSWRASAEEERPTTA) and 483–552 (ALGQ…GRSR). Over residues 361-379 (APREEASRSWRASAEEERP) the composition is skewed to basic and acidic residues. Serine 498 and serine 500 each carry an O-linked (Xyl...) (heparan sulfate) serine glycan. The segment covering 517-527 (VVPPARPPRPP) has biased composition (pro residues). Serine 556 is lipidated: GPI-anchor amidated serine. Residues 557 to 579 (SVGLHTPLVLLLLPSALTLLVLR) constitute a propeptide, removed in mature form.

It belongs to the glypican family. In terms of assembly, interacts (via heparan sulfate) with PTN; this interaction promotes neurite outgrowth through binding of PTN with chondroitin sulfate of proteoglycans, thereby releasing PTPRS of chondroitin sulfate proteoglycans (CSPGs) and leading to binding with heparan sulfate of GPC2. Interacts (heparan sulfate chain) with MDK; this interaction is inhibited by heparin followed by chondroitin sulfate E; this interaction induces GPC2 clustering through heparan sulfate chain; this interaction induces neuronal cell adhesion and neurite outgrowth.

It localises to the cell membrane. It is found in the secreted. Its subcellular location is the extracellular space. Functionally, cell surface proteoglycan that bears heparan sulfate. May fulfill a function related to the motile behaviors of developing neurons. This is Glypican-2 (Gpc2) from Mus musculus (Mouse).